Reading from the N-terminus, the 191-residue chain is UPF0301 protein Bphy_2327 (191 aa).

The protein belongs to the UPF0301 (AlgH) family.

This chain is UPF0301 protein Bphy_2327, found in Paraburkholderia phymatum (strain DSM 17167 / CIP 108236 / LMG 21445 / STM815) (Burkholderia phymatum).